Reading from the N-terminus, the 400-residue chain is Enoyl-[acyl-carrier-protein] reductase [NADH] 2 (400 aa).

NAD(+)-binding positions include 48-53 (GASSGF), 75-76 (FE), 112-113 (DA), and 141-142 (LA). Tyr228 contributes to the substrate binding site. Tyr238 serves as the catalytic Proton donor. Residues Lys247 and 276 to 278 (LVT) each bind NAD(+).

The protein belongs to the TER reductase family. In terms of assembly, monomer.

It carries out the reaction a 2,3-saturated acyl-[ACP] + NAD(+) = a (2E)-enoyl-[ACP] + NADH + H(+). It functions in the pathway lipid metabolism; fatty acid biosynthesis. Functionally, involved in the final reduction of the elongation cycle of fatty acid synthesis (FAS II). Catalyzes the reduction of a carbon-carbon double bond in an enoyl moiety that is covalently linked to an acyl carrier protein (ACP). In Vibrio vulnificus (strain CMCP6), this protein is Enoyl-[acyl-carrier-protein] reductase [NADH] 2.